The primary structure comprises 491 residues: NADPH:adrenodoxin oxidoreductase, mitochondrial (491 aa).

A mitochondrion-targeting transit peptide spans 1 to 32 (MASRCWRWWGWSAWPRTRLPPAGSTPSFCHHF). FAD is bound by residues Ala-49, Glu-69, Leu-77, and Val-113. Residues 184 to 187 (QGNV), 228 to 229 (RR), and Glu-240 each bind NADP(+). Ser-310 and Ser-317 each carry phosphoserine. Residues Trp-398 and 405 to 407 (GVI) each bind FAD. Gly-405 is a binding site for NADP(+).

It belongs to the ferredoxin--NADP reductase type 1 family. As to quaternary structure, monomer. Interacts directly with FDX1. It depends on FAD as a cofactor.

Its subcellular location is the mitochondrion. The protein resides in the mitochondrion inner membrane. It catalyses the reaction 2 reduced [adrenodoxin] + NADP(+) + H(+) = 2 oxidized [adrenodoxin] + NADPH. The catalysed reaction is 2 reduced [2Fe-2S]-[ferredoxin] + NADP(+) + H(+) = 2 oxidized [2Fe-2S]-[ferredoxin] + NADPH. It functions in the pathway steroid metabolism; cholesterol metabolism. In terms of biological role, serves as the first electron transfer protein in all the mitochondrial P450 systems including cholesterol side chain cleavage in all steroidogenic tissues, steroid 11-beta hydroxylation in the adrenal cortex, 25-OH-vitamin D3-24 hydroxylation in the kidney, and sterol C-27 hydroxylation in the liver. Also acts as a ferredoxin--NADP(+) reductase essential for coenzyme Q biosynthesis: together with FDX2, transfers the electrons required for the hydroxylation reaction performed by COQ6. This Homo sapiens (Human) protein is NADPH:adrenodoxin oxidoreductase, mitochondrial.